The following is a 341-amino-acid chain: Acetylpolyamine amidohydrolase (341 aa).

3 residues coordinate substrate: Tyr-19, Glu-106, and Glu-117. His-159 (proton donor/acceptor) is an active-site residue. Zn(2+)-binding residues include Asp-195, His-197, and Asp-284. Tyr-323 lines the substrate pocket.

The protein belongs to the histone deacetylase family. As to quaternary structure, homodimer. Zn(2+) is required as a cofactor.

It carries out the reaction N-acetylputrescine + H2O = putrescine + acetate. It catalyses the reaction N-acetylcadaverine + H2O = cadaverine + acetate. The enzyme catalyses N(1)-acetylspermine + H2O = spermine + acetate. The catalysed reaction is N(1)-acetylspermidine + H2O = spermidine + acetate. It carries out the reaction N(8)-acetylspermidine + H2O = spermidine + acetate. Its pathway is amine and polyamine metabolism. Its activity is regulated as follows. Zinc ions inhibit enzyme activity in a dose-dependent manner. Inhibited by KCl at concentrations above 10 mM. Inhibited by o-oxyquinoline in vitro, suggesting that it is a metalloprotein. Inhibited by various substrate N(8)-acetylspermidine analogs bearing different metal-binding groups such as trifluoromethylketone, thiol, or hydroxamate, and by hydroxamate analogs of short-chain acetyldiamines. In terms of biological role, involved in polyamine metabolism. Catalyzes the deacetylation of various acetylated polyamines such as N-acetylputrescine, N-acetylcadaverine, N(1)-acetylspermine, N(1)-acetylspermidine and N(8)-acetylspermidine. In vitro, is also able to deacetylate L-Lys(epsilon-acetyl)coumarin, but has very low activity towards the larger tetrapeptide N-acetyl-L-Arg-L-His-L-Lys(epsilon-acetyl)-L-Lys(epsilon-acetyl)coumarin. The chain is Acetylpolyamine amidohydrolase from Mycoplana ramosa (Mycoplana bullata).